A 409-amino-acid chain; its full sequence is Lysosome-associated membrane glycoprotein 1 (409 aa).

A signal peptide spans 1–25; the sequence is MAAPGGARRRPLLLLLFAGLVHGAS. A first lumenal domain region spans residues 26–187; sequence AVFVVKNGNG…SNFSREETRC (162 aa). The Lumenal segment spans residues 26–374; sequence AVFVVKNGNG…EECQLDENSM (349 aa). Residues Asn34, Asn59, Asn72, Asn80, Asn103, Asn117, Asn126, Asn146, Asn161, and Asn179 are each glycosylated (N-linked (GlcNAc...) asparagine). Cys38 and Cys76 are oxidised to a cystine. Cysteines 151 and 187 form a disulfide. Residues 180–207 are disordered; the sequence is FSREETRCEQDLPTPTTPPQPAPTPAPA. The tract at residues 188-219 is hinge; it reads EQDLPTPTTPPQPAPTPAPASPAVFRYNVSGS. A compositionally biased stretch (pro residues) spans 194–207; sequence PTTPPQPAPTPAPA. N-linked (GlcNAc...) asparagine glycans are attached at residues Asn215, Asn220, Asn241, Asn253, Asn260, Asn285, Asn299, and Asn314. A second lumenal domain region spans residues 220 to 374; the sequence is NGTCLLASMG…EECQLDENSM (155 aa). The cysteines at positions 223 and 261 are disulfide-linked. Cysteines 330 and 367 form a disulfide. A helical membrane pass occupies residues 375 to 398; sequence LIPIAVGGALAGLVLIVLLAYLIG. Over 399 to 409 the chain is Cytoplasmic; the sequence is RKRSHAGYQTI.

Belongs to the LAMP family. In terms of assembly, interacts with ABCB9; this interaction strongly stabilizes ABCB9 and protects ABCB9 against lysosomal degradation. Interacts with FURIN. Interacts with TMEM175; inhibiting the proton channel activity of TMEM175. Post-translationally, O- and N-glycosylated; some of the N-glycans attached to LAMP-1 are polylactosaminoglycans.

Its subcellular location is the lysosome membrane. It localises to the endosome membrane. The protein resides in the late endosome membrane. It is found in the cell membrane. The protein localises to the cytolytic granule membrane. Its function is as follows. Lysosomal membrane glycoprotein which plays an important role in lysosome biogenesis, lysosomal pH regulation, autophagy and cholesterol homeostasis. Acts as an important regulator of lysosomal lumen pH regulation by acting as a direct inhibitor of the proton channel TMEM175, facilitating lysosomal acidification for optimal hydrolase activity. Also plays an important role in NK-cells cytotoxicity. Mechanistically, participates in cytotoxic granule movement to the cell surface and perforin trafficking to the lytic granule. In addition, protects NK-cells from degranulation-associated damage induced by their own cytotoxic granule content. Presents carbohydrate ligands to selectins. The polypeptide is Lysosome-associated membrane glycoprotein 1 (LAMP1) (Bos taurus (Bovine)).